The chain runs to 504 residues: Maturase K (504 aa).

It belongs to the intron maturase 2 family. MatK subfamily.

The protein localises to the plastid. It localises to the chloroplast. In terms of biological role, usually encoded in the trnK tRNA gene intron. Probably assists in splicing its own and other chloroplast group II introns. In Berzelia lanuginosa (Buttonbush), this protein is Maturase K.